We begin with the raw amino-acid sequence, 82 residues long: Small ribosomal subunit protein bS16 (82 aa).

The protein belongs to the bacterial ribosomal protein bS16 family.

This is Small ribosomal subunit protein bS16 from Francisella tularensis subsp. holarctica (strain FTNF002-00 / FTA).